Reading from the N-terminus, the 187-residue chain is Probable nicotinate-nucleotide adenylyltransferase (187 aa).

Belongs to the NadD family.

The enzyme catalyses nicotinate beta-D-ribonucleotide + ATP + H(+) = deamido-NAD(+) + diphosphate. Its pathway is cofactor biosynthesis; NAD(+) biosynthesis; deamido-NAD(+) from nicotinate D-ribonucleotide: step 1/1. Catalyzes the reversible adenylation of nicotinate mononucleotide (NaMN) to nicotinic acid adenine dinucleotide (NaAD). This chain is Probable nicotinate-nucleotide adenylyltransferase, found in Agrobacterium fabrum (strain C58 / ATCC 33970) (Agrobacterium tumefaciens (strain C58)).